The primary structure comprises 77 residues: MEKLTILLLVAAVLMSTQALIQGGLDERQKAKSNFFSKRKSNAESWWEGECRTWNAPCSFTSQCCFGKCAHHRCIAW.

Positions 1-19 (MEKLTILLLVAAVLMSTQA) are cleaved as a signal peptide. A propeptide spanning residues 20–50 (LIQGGLDERQKAKSNFFSKRKSNAESWWEGE) is cleaved from the precursor. 3 disulfides stabilise this stretch: Cys-51–Cys-65, Cys-58–Cys-69, and Cys-64–Cys-74.

Belongs to the conotoxin O2 superfamily. In terms of tissue distribution, expressed by the venom duct.

It is found in the secreted. The polypeptide is Conotoxin S6.11 (Conus striatus (Striated cone)).